The chain runs to 299 residues: CRISPR-associated endonuclease Cas1 3 (299 aa).

Mn(2+) is bound by residues Glu143, His210, and Asp223.

The protein belongs to the CRISPR-associated endonuclease Cas1 family. Homodimer, forms a heterotetramer with a Cas2 homodimer. It depends on Mg(2+) as a cofactor. The cofactor is Mn(2+).

In terms of biological role, CRISPR (clustered regularly interspaced short palindromic repeat), is an adaptive immune system that provides protection against mobile genetic elements (viruses, transposable elements and conjugative plasmids). CRISPR clusters contain spacers, sequences complementary to antecedent mobile elements, and target invading nucleic acids. CRISPR clusters are transcribed and processed into CRISPR RNA (crRNA). Acts as a dsDNA endonuclease. Involved in the integration of spacer DNA into the CRISPR cassette. The sequence is that of CRISPR-associated endonuclease Cas1 3 from Methanospirillum hungatei JF-1 (strain ATCC 27890 / DSM 864 / NBRC 100397 / JF-1).